A 123-amino-acid polypeptide reads, in one-letter code: Small ribosomal subunit protein uS13 (123 aa).

Residues 95-123 (GLPVRGQKTKTNARTRKGPKRTVGRKKKK) are disordered. Over residues 101–123 (QKTKTNARTRKGPKRTVGRKKKK) the composition is skewed to basic residues.

This sequence belongs to the universal ribosomal protein uS13 family. In terms of assembly, part of the 30S ribosomal subunit. Forms a loose heterodimer with protein S19. Forms two bridges to the 50S subunit in the 70S ribosome.

In terms of biological role, located at the top of the head of the 30S subunit, it contacts several helices of the 16S rRNA. In the 70S ribosome it contacts the 23S rRNA (bridge B1a) and protein L5 of the 50S subunit (bridge B1b), connecting the 2 subunits; these bridges are implicated in subunit movement. Contacts the tRNAs in the A and P-sites. The sequence is that of Small ribosomal subunit protein uS13 from Alkaliphilus metalliredigens (strain QYMF).